The following is a 139-amino-acid chain: MIEGLSHMTFIVRDLERMTRILEGVFDAREVYASDTEQFSLSREKFFLIGDIWVAIMQGEKLAERSYNHIAFKIDDADFDRYAERVGKLGLDMRPPRPRVEGEGRSIYFYDDDNHMFELHTGTLTERLARKAKGLEAAQ.

Positions 4–122 (GLSHMTFIVR…DNHMFELHTG (119 aa)) constitute a VOC domain. His-7 contributes to the Mn(2+) binding site. The active-site Proton acceptor is Glu-44. 2 residues coordinate Mn(2+): His-69 and Glu-118.

It belongs to the fosfomycin resistance protein family. As to quaternary structure, homodimer. Requires Mn(2+) as cofactor.

The protein localises to the cytoplasm. Catalyzes the hydration of fosfomycin. In Mesorhizobium japonicum (strain LMG 29417 / CECT 9101 / MAFF 303099) (Mesorhizobium loti (strain MAFF 303099)), this protein is Fosfomycin resistance protein FosX (fosX).